The chain runs to 128 residues: U24-ctenitoxin-Pn1a (128 aa).

2 consecutive Thyroglobulin type-1 domains span residues 4 to 67 and 72 to 127; these read KSDC…ECGC and KERK…SLKC. 4 disulfides stabilise this stretch: C7–C27, C38–C45, C47–C67, and C107–C127.

Expressed by the venom gland.

The protein resides in the secreted. Cysteine proteinase inhibitor. This is U24-ctenitoxin-Pn1a from Phoneutria nigriventer (Brazilian armed spider).